Reading from the N-terminus, the 491-residue chain is Lysine--tRNA ligase (491 aa).

Mg(2+) is bound by residues Glu-399 and Glu-406.

This sequence belongs to the class-II aminoacyl-tRNA synthetase family. As to quaternary structure, homodimer. Requires Mg(2+) as cofactor.

It localises to the cytoplasm. The catalysed reaction is tRNA(Lys) + L-lysine + ATP = L-lysyl-tRNA(Lys) + AMP + diphosphate. In Chloroflexus aurantiacus (strain ATCC 29366 / DSM 635 / J-10-fl), this protein is Lysine--tRNA ligase.